A 79-amino-acid chain; its full sequence is uncharacterized protein (79 aa).

The disordered stretch occupies residues 1-27 (MRQRGQEHLPTSVKSEPRACNNPTVAE).

This is an uncharacterized protein from Homo sapiens (Human).